A 105-amino-acid polypeptide reads, in one-letter code: Pyrimidine/purine nucleoside phosphorylase (105 aa).

Belongs to the nucleoside phosphorylase PpnP family.

It catalyses the reaction a purine D-ribonucleoside + phosphate = a purine nucleobase + alpha-D-ribose 1-phosphate. The catalysed reaction is adenosine + phosphate = alpha-D-ribose 1-phosphate + adenine. It carries out the reaction cytidine + phosphate = cytosine + alpha-D-ribose 1-phosphate. The enzyme catalyses guanosine + phosphate = alpha-D-ribose 1-phosphate + guanine. It catalyses the reaction inosine + phosphate = alpha-D-ribose 1-phosphate + hypoxanthine. The catalysed reaction is thymidine + phosphate = 2-deoxy-alpha-D-ribose 1-phosphate + thymine. It carries out the reaction uridine + phosphate = alpha-D-ribose 1-phosphate + uracil. The enzyme catalyses xanthosine + phosphate = alpha-D-ribose 1-phosphate + xanthine. In terms of biological role, catalyzes the phosphorolysis of diverse nucleosides, yielding D-ribose 1-phosphate and the respective free bases. Can use uridine, adenosine, guanosine, cytidine, thymidine, inosine and xanthosine as substrates. Also catalyzes the reverse reactions. The polypeptide is Pyrimidine/purine nucleoside phosphorylase (Wolinella succinogenes (strain ATCC 29543 / DSM 1740 / CCUG 13145 / JCM 31913 / LMG 7466 / NCTC 11488 / FDC 602W) (Vibrio succinogenes)).